Consider the following 94-residue polypeptide: Co-chaperonin GroES (94 aa).

The protein belongs to the GroES chaperonin family. As to quaternary structure, heptamer of 7 subunits arranged in a ring. Interacts with the chaperonin GroEL.

It localises to the cytoplasm. In terms of biological role, together with the chaperonin GroEL, plays an essential role in assisting protein folding. The GroEL-GroES system forms a nano-cage that allows encapsulation of the non-native substrate proteins and provides a physical environment optimized to promote and accelerate protein folding. GroES binds to the apical surface of the GroEL ring, thereby capping the opening of the GroEL channel. The polypeptide is Co-chaperonin GroES (Ehrlichia ruminantium (strain Gardel)).